The chain runs to 330 residues: Basic leucine zipper 2 (330 aa).

The segment at 1–207 is disordered; that stretch reads MAQLPPKIPT…NRQSAQRSRV (207 aa). Residues 21 to 34 are compositionally biased toward basic residues; that stretch reads GHHHHAAHGHHHQR. The segment covering 45-56 has biased composition (pro residues); sequence PLPPFPLPPPAP. 2 stretches are compositionally biased toward low complexity: residues 57-72 and 139-151; these read ANGGAQQQQQQQQHQP and QPAAPAASASSPS. Positions 155-166 are enriched in basic and acidic residues; it reads SMNDEKQDKGET. In terms of domain architecture, bZIP spans 188–244; the sequence is DPKRVKRILANRQSAQRSRVRKLQYISELERSVTSLQTEVSALSPRVAFLDHQRSLL. The tract at residues 190-209 is basic motif; it reads KRVKRILANRQSAQRSRVRK. The tract at residues 216 to 244 is leucine-zipper; that stretch reads LERSVTSLQTEVSALSPRVAFLDHQRSLL. A disordered region spans residues 267–330; the sequence is GGTEEGDREA…LVIGRDPDAL (64 aa).

In terms of tissue distribution, expressed in roots, shoots and panicles.

The protein localises to the nucleus. Functionally, transcription regulator. This is Basic leucine zipper 2 (BZIP02) from Oryza sativa subsp. japonica (Rice).